The sequence spans 205 residues: Dephospho-CoA kinase (205 aa).

The DPCK domain maps to 6–205 (RIGLTGGIAA…EIYAGWCAGR (200 aa)). An ATP-binding site is contributed by 14–19 (AAGKST).

It belongs to the CoaE family.

It localises to the cytoplasm. The enzyme catalyses 3'-dephospho-CoA + ATP = ADP + CoA + H(+). Its pathway is cofactor biosynthesis; coenzyme A biosynthesis; CoA from (R)-pantothenate: step 5/5. Catalyzes the phosphorylation of the 3'-hydroxyl group of dephosphocoenzyme A to form coenzyme A. The chain is Dephospho-CoA kinase from Bifidobacterium longum (strain NCC 2705).